A 157-amino-acid polypeptide reads, in one-letter code: Protein Smg homolog (157 aa).

It belongs to the Smg family.

This is Protein Smg homolog from Aliivibrio fischeri (strain MJ11) (Vibrio fischeri).